A 696-amino-acid chain; its full sequence is PWWP domain-containing DNA repair factor 3B (696 aa).

Composition is skewed to polar residues over residues 119–128 and 290–300; these read QNVPQKQSDS and CLDTSQNQPSM. Disordered regions lie at residues 119 to 143 and 278 to 303; these read QNVP…DLPG and NIED…MESE. The residue at position 128 (Ser128) is a Phosphoserine. The PWWP domain maps to 392 to 453; that stretch reads TGMIVWFKYQ…KKFDCKEKQM (62 aa).

Belongs to the PWWP3A family.

This is PWWP domain-containing DNA repair factor 3B from Homo sapiens (Human).